The sequence spans 340 residues: NAD kinase (340 aa).

Aspartate 66 acts as the Proton acceptor in catalysis. Residues 66–67 (DG), arginine 71, 141–142 (ND), lysine 152, aspartate 171, 182–187 (TAYAFS), and alanine 206 each bind NAD(+). Positions 321–340 (AGVAGTEPDKPGERDGKAGS) are disordered. The span at 327–340 (EPDKPGERDGKAGS) shows a compositional bias: basic and acidic residues.

The protein belongs to the NAD kinase family. A divalent metal cation is required as a cofactor.

The protein resides in the cytoplasm. It catalyses the reaction NAD(+) + ATP = ADP + NADP(+) + H(+). Its function is as follows. Involved in the regulation of the intracellular balance of NAD and NADP, and is a key enzyme in the biosynthesis of NADP. Catalyzes specifically the phosphorylation on 2'-hydroxyl of the adenosine moiety of NAD to yield NADP. This Bifidobacterium longum (strain DJO10A) protein is NAD kinase.